A 175-amino-acid chain; its full sequence is Putative FAS1 domain-containing protein 081L (175 aa).

Positions 28 to 172 constitute an FAS1 domain; it reads GPIVPSVWTI…GLVHIVDQFP (145 aa).

The chain is Putative FAS1 domain-containing protein 081L from Invertebrate iridescent virus 3 (IIV-3).